A 91-amino-acid polypeptide reads, in one-letter code: DNA-binding protein HU (91 aa).

This sequence belongs to the bacterial histone-like protein family. Homodimer.

Its function is as follows. Histone-like DNA-binding protein which is capable of wrapping DNA to stabilize it, and thus to prevent its denaturation under extreme environmental conditions. The sequence is that of DNA-binding protein HU (hup) from Streptococcus thermophilus.